A 101-amino-acid polypeptide reads, in one-letter code: MSSTLIVQLDMRTLCQEADVTAECVIEIVEHGIVEPSGRTPEDWLFDDQAPLVTKRAVKLHQELELEWEGVALALELLQEVQQLRSENSMLKQRLGRFIQL.

It belongs to the CbpM family.

Interacts with CbpA and inhibits both the DnaJ-like co-chaperone activity and the DNA binding activity of CbpA. Together with CbpA, modulates the activity of the DnaK chaperone system. Does not inhibit the co-chaperone activity of DnaJ. The chain is Chaperone modulatory protein CbpM from Pseudomonas putida (strain ATCC 47054 / DSM 6125 / CFBP 8728 / NCIMB 11950 / KT2440).